We begin with the raw amino-acid sequence, 276 residues long: Adenylate kinase (276 aa).

Position 50-55 (50-55) interacts with ATP; the sequence is GAGKGT. The segment at 70-99 is NMP; the sequence is ATGDMLRSQVAKKTPLGREAKKIMDQGGLV. AMP is bound by residues Thr71, Arg76, 97–99, 126–129, and Gln133; these read GLV and GFPR. Positions 167–204 are LID; it reads GRLVHPASGRSYHTTFNPPKKAMTDDVTGEPLIQRSDD. Residues Arg168 and 177 to 178 each bind ATP; that span reads SY. Positions 201 and 212 each coordinate AMP. An ATP-binding site is contributed by Gln240.

The protein belongs to the adenylate kinase family. AK2 subfamily. In terms of assembly, monomer.

The protein localises to the cytoplasm. It is found in the cytosol. It localises to the mitochondrion intermembrane space. The catalysed reaction is AMP + ATP = 2 ADP. Functionally, catalyzes the reversible transfer of the terminal phosphate group between ATP and AMP. Plays an important role in cellular energy homeostasis and in adenine nucleotide metabolism. Adenylate kinase activity is critical for regulation of the phosphate utilization and the AMP de novo biosynthesis pathways. In Pyricularia oryzae (strain 70-15 / ATCC MYA-4617 / FGSC 8958) (Rice blast fungus), this protein is Adenylate kinase.